Here is a 485-residue protein sequence, read N- to C-terminus: Glycogen synthase (485 aa).

K15 lines the ADP-alpha-D-glucose pocket.

The protein belongs to the glycosyltransferase 1 family. Bacterial/plant glycogen synthase subfamily.

It catalyses the reaction [(1-&gt;4)-alpha-D-glucosyl](n) + ADP-alpha-D-glucose = [(1-&gt;4)-alpha-D-glucosyl](n+1) + ADP + H(+). Its pathway is glycan biosynthesis; glycogen biosynthesis. Its function is as follows. Synthesizes alpha-1,4-glucan chains using ADP-glucose. In Francisella philomiragia subsp. philomiragia (strain ATCC 25017 / CCUG 19701 / FSC 153 / O#319-036), this protein is Glycogen synthase.